Here is a 100-residue protein sequence, read N- to C-terminus: Urease subunit gamma (100 aa).

It belongs to the urease gamma subunit family. Heterotrimer of UreA (gamma), UreB (beta) and UreC (alpha) subunits. Three heterotrimers associate to form the active enzyme.

It is found in the cytoplasm. It carries out the reaction urea + 2 H2O + H(+) = hydrogencarbonate + 2 NH4(+). It participates in nitrogen metabolism; urea degradation; CO(2) and NH(3) from urea (urease route): step 1/1. The chain is Urease subunit gamma from Cupriavidus pinatubonensis (strain JMP 134 / LMG 1197) (Cupriavidus necator (strain JMP 134)).